Reading from the N-terminus, the 259-residue chain is Hydroxyacylglutathione hydrolase (259 aa).

Histidine 56, histidine 58, aspartate 60, histidine 61, histidine 112, aspartate 133, and histidine 171 together coordinate Zn(2+).

The protein belongs to the metallo-beta-lactamase superfamily. Glyoxalase II family. In terms of assembly, monomer. It depends on Zn(2+) as a cofactor.

It catalyses the reaction an S-(2-hydroxyacyl)glutathione + H2O = a 2-hydroxy carboxylate + glutathione + H(+). The protein operates within secondary metabolite metabolism; methylglyoxal degradation; (R)-lactate from methylglyoxal: step 2/2. Functionally, thiolesterase that catalyzes the hydrolysis of S-D-lactoyl-glutathione to form glutathione and D-lactic acid. The polypeptide is Hydroxyacylglutathione hydrolase (Pseudomonas putida (strain ATCC 47054 / DSM 6125 / CFBP 8728 / NCIMB 11950 / KT2440)).